The following is a 969-amino-acid chain: MPPRAPPAPGPRPPPRAAAATDTAAGAGGAGGAGGAGGPGFRPLAPRPWRWLLLLALPAACSAPPPRPVYTNHWAVQVLGGPAEADRVAAAHGYLNLGQIGNLEDYYHFYHSKTFKRSTLSSRGPHTFLRMDPQVKWLQQQEVKRRVKRQVRSDPQALYFNDPIWSNMWYLHCGDKNSRCRSEMNVQAAWKRGYTGKNVVVTILDDGIERNHPDLAPNYDSYASYDVNGNDYDPSPRYDASNENKHGTRCAGEVAASANNSYCIVGIAYNAKIGGIRMLDGDVTDVVEAKSLGIRPNYIDIYSASWGPDDDGKTVDGPGRLAKQAFEYGIKKGRQGLGSIFVWASGNGGREGDYCSCDGYTNSIYTISVSSATENGYKPWYLEECASTLATTYSSGAFYERKIVTTDLRQRCTDGHTGTSVSAPMVAGIIALALEANSQLTWRDVQHLLVKTSRPAHLKASDWKVNGAGHKVSHFYGFGLVDAEALVVEAKKWTAVPSQHMCVAASDKRPRSIPLVQVLRTTALTSACAEHSDQRVVYLEHVVVRTSISHPRRGDLQIYLVSPSGTKSQLLAKRLLDLSNEGFTNWEFMTVHCWGEKAEGQWTLEIQDLPSQVRNPEKQGKLKEWSLILYGTAEHPYHTFSAHQSRSRMLELSAPELEPPKAALSPSQVEVPEDEEDYTAQSTPGSANILQTSVCHPECGDKGCDGPNADQCLNCVHFSLGSVKTSRKCVSVCPLGYFGDTAARRCRRCHKGCETCSSRAATQCLSCRRGFYHHQEMNTCVTLCPAGFYADESQKNCLKCHPSCKKCVDEPEKCTVCKEGFSLARGSCIPDCEPGTYFDSELIRCGECHHTCGTCVGPGREECIHCAKNFHFHDWKCVPACGEGFYPEEMPGLPHKVCRRCDENCLSCAGSSRNCSRCKTGFTQLGTSCITNHTCSNADETFCEMVKSNRLCERKLFIQFCCRTCLLAG.

Residues M1–R16 are compositionally biased toward pro residues. The interval M1–P39 is disordered. The first 63 residues, M1–A63, serve as a signal peptide directing secretion. Residues G26 to P39 show a composition bias toward gly residues. A propeptide spanning residues P64–R149 is cleaved from the precursor. The Peptidase S8 domain maps to M168–V487. Active-site charge relay system residues include D205 and H246. N259 is a glycosylation site (N-linked (GlcNAc...) asparagine). Residue S420 is the Charge relay system of the active site. Residues A495–H635 form the P/Homo B domain. The short motif at R553–D555 is the Cell attachment site element. The tract at residues E658–T683 is disordered. FU repeat units follow at residues T692–G739, A743–A790, Q794–F838, L842–P887, and H895–C943. Positions C695 to I930 are CRM (Cys-rich motif). 2 N-linked (GlcNAc...) asparagine glycosylation sites follow: N914 and N932. The PLAC domain occupies T931–G969.

The protein belongs to the peptidase S8 family. In terms of assembly, the PACE4A-I precursor protein seems to exist in the reticulum endoplasmic as both a monomer and a dimer-sized complex whereas mature PACE4A-I exists only as a monomer, suggesting that propeptide cleavage affects its tertiary or quaternary structure. Interacts (immature form including the propeptide) with RCN3; probably involved in the maturation and the secretion of PCSK6. Requires Ca(2+) as cofactor. In terms of tissue distribution, each PACE4 isoform exhibits a unique restricted distribution. Isoform PACE4A-I is expressed in heart, brain, placenta, lung, skeletal muscle, kidney, pancreas, but at comparatively higher levels in the liver. Isoform PACE4A-II is at least expressed in placenta. Isoform PACE4B was only found in the embryonic kidney cell line from which it was isolated. Isoform PACE4C and isoform PACE4D are expressed in placenta. Isoform PACE4E-I is expressed in cerebellum, placenta and pituitary. Isoform PACE4E-II is at least present in cerebellum.

It is found in the secreted. It localises to the endoplasmic reticulum. The protein localises to the endomembrane system. In terms of biological role, serine endoprotease that processes various proproteins by cleavage at paired basic amino acids, recognizing the RXXX[KR]R consensus motif. Likely functions in the constitutive secretory pathway, with unique restricted distribution in both neuroendocrine and non-neuroendocrine tissues. The polypeptide is Proprotein convertase subtilisin/kexin type 6 (PCSK6) (Homo sapiens (Human)).